Reading from the N-terminus, the 643-residue chain is Phosphoenolpyruvate carboxykinase [GTP] (643 aa).

Substrate-binding positions include Arg102 and 253 to 255 (YGG). Mn(2+) is bound by residues Lys262 and His282. Ser304 is a binding site for substrate. 305-310 (ACGKTN) is a GTP binding site. Cys306 is an active-site residue. Position 329 (Asp329) interacts with Mn(2+). 422-424 (NSR) is a substrate binding site. Residues Arg424, Arg455, and 548-551 (YGDN) contribute to the GTP site.

It belongs to the phosphoenolpyruvate carboxykinase [GTP] family. Monomer. Requires Mn(2+) as cofactor.

The enzyme catalyses oxaloacetate + GTP = phosphoenolpyruvate + GDP + CO2. In terms of biological role, in parasitic nematodes PEPCK carboxylates phosphoenolpyruvate to oxaloacetate thus introducing the products of glycolysis to mitochondrial metabolism. Catalyzes the conversion of oxaloacetate (OAA) to phosphoenolpyruvate (PEP), the rate-limiting step in the metabolic pathway that produces glucose from lactate and other precursors derived from the citric acid cycle. The protein is Phosphoenolpyruvate carboxykinase [GTP] (PEPCK) of Ascaris suum (Pig roundworm).